A 106-amino-acid polypeptide reads, in one-letter code: MNDSEFHQLADTLMLKVEETLDQFDGDADIDYETNGGVMTLSFENGSKIVINRQEPMHQVWLATKGGGYHFDYQHGRWICDRSGSDFMALLAQACTEQSGEEIHFD.

The protein belongs to the frataxin family.

Functionally, involved in iron-sulfur (Fe-S) cluster assembly. May act as a regulator of Fe-S biogenesis. The chain is Iron-sulfur cluster assembly protein CyaY from Dickeya chrysanthemi (Pectobacterium chrysanthemi).